The following is a 541-amino-acid chain: MERDDGGGGGLFFRGLQNRSHEKTKLRTRKSTLYLSPQKSTGRCGDLGENIYLVLFIIALRICNCFLVQTSFVPDEYWQSLEVAHRMVFNYGYLTWEWTERLRGYTYPLIFASIYKILHLLGKDSVHLLIWIPRLAQALLSAIADLRLYSLMKQLENQQVARWVFFCQLCSWFTWYCCTRTLTNTMETVLTIIALFYYPLEGSKSMNSVKYSSLVALAFIIRPTAVIPWIPLLFRHFWQEQRKLDLILHQFLPVGFVTLSLSLIIDRIFFGQWTLVQYNFLKFNVLQDLGSFYGSHPWHWYFSQGFPAVLGTHLPFFIHGCFLAPKRYRIFLVTVLWTLLVYSMLSHKEFRFIYPVLPFCMVFCGYSLNNLKTWKKPALSFLFLSNMLLALYTGLVHQRGTLDVMTNIQELSYNNTNVSSASVLMMMPCHSTPYYSHVHYPLPMRFLQCPPDLTGKTDYLVEADMFYLNPLKWLYMEFQNDSQLPTHLIMFSVLEEEISPFLISNNYERTAVFFHTHFPESRTGSHIYVYERKLKGKLNQR.

Residue N18 is glycosylated (N-linked (GlcNAc...) asparagine). 9 helical membrane passes run 53-73 (LVLFIIALRICNCFLVQTSFV), 126-146 (VHLLIWIPRLAQALLSAIADL), 182-202 (LTNTMETVLTIIALFYYPLEG), 214-234 (LVALAFIIRPTAVIPWIPLLF), 245-265 (DLILHQFLPVGFVTLSLSLII), 305-325 (GFPAVLGTHLPFFIHGCFLAP), 330-350 (IFLVTVLWTLLVYSMLSHKEF), 352-372 (FIYPVLPFCMVFCGYSLNNLK), and 377-397 (PALSFLFLSNMLLALYTGLVH). An N-linked (GlcNAc...) asparagine glycan is attached at N417.

Belongs to the glycosyltransferase 22 family. PIGB subfamily.

The protein resides in the endoplasmic reticulum membrane. It participates in glycolipid biosynthesis; glycosylphosphatidylinositol-anchor biosynthesis. In terms of biological role, alpha-1,2-mannosyltransferase that catalyzes the transfer of the third mannose, via an alpha-1,2 bond, from a dolichol-phosphate-mannose (Dol-P-Man) to an alpha-D-Man-(1-&gt;6)-2-PEtn-alpha-D-Man-(1-&gt;4)-alpha-D-GlcN-(1-&gt;6)-(1-radyl,2-acyl-sn-glycero-3-phospho)-2-acyl-inositol intermediate to generate an alpha-D-Man-(1-&gt;2)-alpha-D-Man-(1-&gt;6)-2-PEtn-alpha-D-Man-(1-&gt;4)-alpha-D-GlcN-(1-&gt;6)-(1-radyl,2-acyl-sn-glycero-3-phospho)-2-acyl-inositol (also termed H6) and participates in the nineth step of the glycosylphosphatidylinositol-anchor biosynthesis. May also add the third mannose to an alpha-D-Man-(1-&gt;6)-alpha-D-Man-(1-&gt;4)-alpha-D-GlcN-(1-&gt;6)-(1-radyl,2-acyl-sn-glycero-3-phospho)-2-acyl-inositol (also termed H3) intermediate generating an alpha-D-Man-(1-&gt;2)-alpha-D-Man-(1-&gt;6)-alpha-D-Man-(1-&gt;4)-alpha-D-GlcN-(1-&gt;6)-(1-radyl,2-acyl-sn-glycero-3-phospho)-2-acyl-inositol (also termed H4). This chain is GPI alpha-1,2-mannosyltransferase 3, found in Bos taurus (Bovine).